Reading from the N-terminus, the 465-residue chain is Neutrophil collagenase (465 aa).

The first 20 residues, 1–20, serve as a signal peptide directing secretion; the sequence is MFRLKTLPLLIFLHTQLANA. Residues 21–100 constitute a propeptide, activation peptide; the sequence is FPVPEHLEEK…CGVPDSGDFL (80 aa). Asparagine 55 carries N-linked (GlcNAc...) asparagine glycosylation. The Cysteine switch motif lies at 89 to 96; that stretch reads PRCGVPDS. Cysteine 91 is a Zn(2+) binding site. Residue asparagine 112 is glycosylated (N-linked (GlcNAc...) asparagine). Aspartate 157 provides a ligand contact to Ca(2+). The Zn(2+) site is built by histidine 167 and aspartate 169. Residues aspartate 174, glycine 175, asparagine 177, and isoleucine 179 each contribute to the Ca(2+) site. Residue histidine 182 coordinates Zn(2+). Ca(2+) is bound by residues glycine 189, glycine 191, and aspartate 193. Histidine 195 is a Zn(2+) binding site. Ca(2+) is bound by residues aspartate 197 and glutamate 200. Residue histidine 217 participates in Zn(2+) binding. Residue glutamate 218 is part of the active site. 2 residues coordinate Zn(2+): histidine 221 and histidine 227. Hemopexin repeat units lie at residues 276–325, 326–372, 374–420, and 421–464; these read PKAC…WPFL, PNGL…GFPR, VQAI…FPGV, and NCRV…WLNC. The cysteines at positions 279 and 464 are disulfide-linked. Aspartate 286 is a Ca(2+) binding site. Ca(2+) is bound by residues aspartate 378 and aspartate 425.

Belongs to the peptidase M10A family. The cofactor is Ca(2+). Zn(2+) is required as a cofactor. As to expression, neutrophils. Expressed in uterus. Low levels in kidney and muscle.

It is found in the cytoplasmic granule. The protein localises to the secreted. It localises to the extracellular space. The protein resides in the extracellular matrix. The enzyme catalyses Cleavage of interstitial collagens in the triple helical domain. Unlike EC 3.4.24.7, this enzyme cleaves type III collagen more slowly than type I.. Cannot be activated without removal of the activation peptide. Activated by matrilysin. Its function is as follows. Can degrade fibrillar type I, II, and III collagens. May play a role in the degradation of collagen fibers during uterine involution. In Mus musculus (Mouse), this protein is Neutrophil collagenase (Mmp8).